Consider the following 446-residue polypeptide: D(1A) dopamine receptor (446 aa).

The Extracellular portion of the chain corresponds to 1 to 23 (MRTLNTSTMDGTGLVVERDFSFR). An N-linked (GlcNAc...) asparagine glycan is attached at N5. The helical transmembrane segment at 24–49 (ILTACFLSLLILSTLLGNTLVCAAVI) threads the bilayer. Over 50 to 60 (RFRHLRSKVTN) the chain is Cytoplasmic. The chain crosses the membrane as a helical span at residues 61-87 (FFVISLAVSDLLVAVLVMPWKAVAEIA). Residues 88–96 (GFWPFGSFC) lie on the Extracellular side of the membrane. C96 and C186 are joined by a disulfide. A helical transmembrane segment spans residues 97–119 (NIWVAFDIMCSTASILNLCVISV). The Cytoplasmic segment spans residues 120-138 (DRYWAISSPFRYERKMTPK). The chain crosses the membrane as a helical span at residues 139–163 (AAFILISVAWTLSVLISFIPVQLSW). Over 164–192 (HKAKPTSPSDGNVTSLGKTTHNCDSSLSR) the chain is Extracellular. A helical membrane pass occupies residues 193-218 (TYAISSSLISFYIPVAIMIVTYTRIY). Residues 219–272 (RIAQKQIRRISALERAAVHAKNCQTTAGNGNPAECSQPESSFKMSFKRETKVLK) are Cytoplasmic-facing. Residues 273–299 (TLSVIMGVFVCCWLPFFILNCMVPFCG) traverse the membrane as a helical segment. The Extracellular portion of the chain corresponds to 300-312 (SGETKPFCIDSIT). Residues 313-337 (FDVFVWFGWANSSLNPIIYAFNADF) traverse the membrane as a helical segment. At 338 to 446 (RKAFSTLLGC…PITQNGQHPT (109 aa)) the chain is on the cytoplasmic side. Residues C347 and C351 are each lipidated (S-palmitoyl cysteine).

Belongs to the G-protein coupled receptor 1 family. Interacts with DNAJC14 via its C-terminus. Interacts with DRD2. Interacts with DORIP1.

Its subcellular location is the cell membrane. The protein resides in the endoplasmic reticulum membrane. It localises to the cell projection. It is found in the cilium membrane. The protein localises to the dendrite. Its subcellular location is the dendritic spine. Dopamine receptor whose activity is mediated by G proteins which activate adenylyl cyclase. This Sus scrofa (Pig) protein is D(1A) dopamine receptor (DRD1).